The sequence spans 144 residues: Large ribosomal subunit protein uL16 (144 aa).

This sequence belongs to the universal ribosomal protein uL16 family. As to quaternary structure, part of the 50S ribosomal subunit.

Functionally, binds 23S rRNA and is also seen to make contacts with the A and possibly P site tRNAs. In Thermoanaerobacter pseudethanolicus (strain ATCC 33223 / 39E) (Clostridium thermohydrosulfuricum), this protein is Large ribosomal subunit protein uL16.